Consider the following 792-residue polypeptide: Phenylalanine--tRNA ligase beta subunit (792 aa).

Residues 39 to 147 (GESLGQVVVA…DDAPVGQALA (109 aa)) enclose the tRNA-binding domain. The B5 domain maps to 400–475 (PQPARILLRR…RIHGYDRVPT (76 aa)). Mg(2+)-binding residues include D453, D459, E462, and D463. The region spanning 698–791 (SRFPSVRRDL…IEREHRARIR (94 aa)) is the FDX-ACB domain.

The protein belongs to the phenylalanyl-tRNA synthetase beta subunit family. Type 1 subfamily. In terms of assembly, tetramer of two alpha and two beta subunits. Mg(2+) is required as a cofactor.

It is found in the cytoplasm. It catalyses the reaction tRNA(Phe) + L-phenylalanine + ATP = L-phenylalanyl-tRNA(Phe) + AMP + diphosphate + H(+). This Xanthomonas oryzae pv. oryzae (strain MAFF 311018) protein is Phenylalanine--tRNA ligase beta subunit.